Reading from the N-terminus, the 438-residue chain is Glucosamine kinase (438 aa).

ATP contacts are provided by residues Lys-133, 186 to 188 (AYL), and Asp-193. Asp-300 serves as a coordination point for D-glucosamine. Residues Gln-305, Asp-317, and Asp-319 each contribute to the Mg(2+) site. Positions 405–420 (QEVREYLYAVRHLPHW) match the Substrate specificity determinant motif motif. Glu-409 serves as a coordination point for D-glucosamine.

The protein belongs to the actinobacterial glucosamine kinase family. As to quaternary structure, monomer. Requires Mg(2+) as cofactor.

The enzyme catalyses D-glucosamine + ATP = D-glucosamine 6-phosphate + ADP + H(+). Its function is as follows. Catalyzes the ATP-dependent phosphorylation of D-glucosamine (GlcN) to D-glucosamine 6-phosphate. May be involved in the phosphorylation of acquired extracellular GlcN derived from the hydrolysis of chitosan, i.e., in the incorporation of exogenous GlcN into the bacterial GlcNAc metabolism. To a lesser extent, is also active on glucose, but is unable to phosphorylate maltose, 18 other sugars and several aminoglycoside antibiotics. The polypeptide is Glucosamine kinase (Streptacidiphilus jiangxiensis).